We begin with the raw amino-acid sequence, 320 residues long: Mas-related G-protein coupled receptor member D (320 aa).

The Extracellular portion of the chain corresponds to 1–33 (MNQTLNSSGTAELALNHSRGSVVHAACLVLSSL). N2, N6, and N16 each carry an N-linked (GlcNAc...) asparagine glycan. A helical transmembrane segment spans residues 34-54 (AMFTCLCGMAGNSMVIWLLGF). Topologically, residues 55–62 (RMRRTPFS) are cytoplasmic. The helical transmembrane segment at 63-83 (IYILNLAAADLLFVFCMAAML) threads the bilayer. Residues 84–112 (SLETQPLVSTTDKVHELMKRLKYFAYTVG) are Extracellular-facing. The helical transmembrane segment at 113–133 (LSLLTAISTQRCLSVLFPIWF) threads the bilayer. Topologically, residues 134–142 (KCHRPRHLS) are cytoplasmic. A helical membrane pass occupies residues 143-163 (AWVCALLWMLCLLTNGLTSCF). Residues 164-182 (CSKFLKFNKDQCFRVDMVQ) lie on the Extracellular side of the membrane. The chain crosses the membrane as a helical span at residues 183–203 (AALIMGVLTPVMTLSSLTLFV). The Cytoplasmic segment spans residues 204–218 (RVRRSSQQWRRQPTR). The chain crosses the membrane as a helical span at residues 219–239 (LFVVVLASVLVFLICSLPLGF). Residues 240 to 257 (YWFVLYWLNLPPDTKVLY) lie on the Extracellular side of the membrane. A helical membrane pass occupies residues 258 to 280 (FNLSRLSSSMSSSANPLIYFLVG). Topologically, residues 281 to 320 (SRRSRRLQGSLGTVLQRALREEPELEGGETPTTGTNEMGA) are cytoplasmic. The interval 301 to 320 (EEPELEGGETPTTGTNEMGA) is disordered. The segment covering 308–320 (GETPTTGTNEMGA) has biased composition (low complexity).

The protein belongs to the G-protein coupled receptor 1 family. Mas subfamily. As to expression, co-expressed in the small diameter neurons with P2X3 and VR1 in dorsal root ganglia.

Its subcellular location is the cell membrane. Its function is as follows. May regulate nociceptor function and/or development, including the sensation or modulation of pain. Functions as a specific membrane receptor for beta-alanine. The receptor couples with G-protein G(q) and G(i). In Macaca fascicularis (Crab-eating macaque), this protein is Mas-related G-protein coupled receptor member D (MRGPRD).